A 369-amino-acid polypeptide reads, in one-letter code: MRIASFFTVLLTLLTLNIAPASAERIRDLVNIQGVRGNALIGYGLVVGLDGSGDQTMQTPFTTQSLTNMLSQLGITVPAGTNMQLKNVAAVMVTAELPPFGRAGQNIDVVVSSLGNAKSLRGGTLLMTPLKGVDNQVYALAQGNVLVGGAGASAGGSSVQVNQLAGGRISNGAVIERELPSTFGASNTIMLQLKNDDFSMAQKVSDAINRSGYGGTATPLDSRTIQVLAPHGNSSQVRFLADVQNIEVNVGIQDAKVVINSRTGSVVMNRDVTLDSCAIAQGNLSVTINQQANVSQPNTPFGGGQTVVTPQTEISVQQAGGALQRVNSSANLNNVVRALNSLGATPMELMSILQAMQSAGCLRAKLEII.

Residues 1–23 (MRIASFFTVLLTLLTLNIAPASA) form the signal peptide.

This sequence belongs to the FlgI family. In terms of assembly, the basal body constitutes a major portion of the flagellar organelle and consists of four rings (L,P,S, and M) mounted on a central rod.

It localises to the periplasm. Its subcellular location is the bacterial flagellum basal body. In terms of biological role, assembles around the rod to form the L-ring and probably protects the motor/basal body from shearing forces during rotation. This Pectobacterium carotovorum subsp. carotovorum (strain PC1) protein is Flagellar P-ring protein.